A 187-amino-acid chain; its full sequence is Cell division protein SepF (187 aa).

The interval 21-97 (EVEVPDKQQQ…ATPNNASQES (77 aa)) is disordered. Polar residues-rich tracts occupy residues 38–63 (EQSQ…YTTT) and 70–97 (RMSN…SQES).

It belongs to the SepF family. In terms of assembly, homodimer. Interacts with FtsZ.

Its subcellular location is the cytoplasm. Cell division protein that is part of the divisome complex and is recruited early to the Z-ring. Probably stimulates Z-ring formation, perhaps through the cross-linking of FtsZ protofilaments. Its function overlaps with FtsA. The polypeptide is Cell division protein SepF (Staphylococcus aureus (strain Mu3 / ATCC 700698)).